Here is a 1288-residue protein sequence, read N- to C-terminus: Contactin-associated protein-like 3B (1288 aa).

The first 25 residues, 1-25 (MASVAWAVLKVLLLLPTQTWSPVGA), serve as a signal peptide directing secretion. Positions 23-61 (VGAGNPPDCDSPLASALPRSSFSSSSELSSSHGPGFSRL) are disordered. The Extracellular segment spans residues 26-1245 (GNPPDCDSPL…LVNADRRDSA (1220 aa)). In terms of domain architecture, F5/8 type C spans 31–177 (CDSPLASALP…IGMRIEVYGC (147 aa)). Cystine bridges form between Cys-31-Cys-177, Cys-332-Cys-364, Cys-513-Cys-545, Cys-551-Cys-562, Cys-556-Cys-571, and Cys-573-Cys-583. The span at 33–59 (SPLASALPRSSFSSSSELSSSHGPGFS) shows a compositional bias: low complexity. 2 consecutive Laminin G-like domains span residues 183 to 364 (VVYF…SFSC) and 370 to 545 (VPVT…IDSC). Asn-359 is a glycosylation site (N-linked (GlcNAc...) asparagine). One can recognise an EGF-like 1 domain in the interval 547-584 (ITDRCLPSYCEHGGECSQSWDTFSCDCLGTGYTGETCH). Residues 585-792 (SSLYEQSCEA…LLCRGDKSFW (208 aa)) enclose the Fibrinogen C-terminal domain. Asn-706 carries an N-linked (GlcNAc...) asparagine glycan. The Laminin G-like 3 domain occupies 793 to 958 (NSASFNTETS…TVTPGVEPGC (166 aa)). Disulfide bonds link Cys-931–Cys-958, Cys-962–Cys-975, Cys-969–Cys-984, Cys-986–Cys-996, and Cys-1167–Cys-1203. The region spanning 959–997 (AGHCSTYGHLCRNGGRCREKRRGVTCDCAFSAYDGPFCS) is the EGF-like 2 domain. A Laminin G-like 4 domain is found at 1016-1203 (EHYTLSENSS…RGHVAPMARC (188 aa)). Residues 1215–1236 (ELAPRLAGGAGRSGPVDEGEPL) are disordered. Residues 1246-1266 (VIGGVIAVEIFILLCITAIAI) form a helical membrane-spanning segment. The Cytoplasmic portion of the chain corresponds to 1267–1288 (RIYQQRKLRKENESKVSKKEEC).

Belongs to the neurexin family.

It is found in the membrane. This chain is Contactin-associated protein-like 3B (CNTNAP3B), found in Homo sapiens (Human).